The sequence spans 1787 residues: Chromodomain-helicase-DNA-binding protein 3 homolog (1787 aa).

2 disordered regions span residues 1–80 (MSDD…PDPY) and 170–258 (PVTP…KEQG). Over residues 10–43 (DGDETMEEDSMLAEGHEDGEEDVGEDEEEVETEE) the composition is skewed to acidic residues. Residues 56-71 (PPPKKKKGGKKSSKKK) are compositionally biased toward basic residues. Residues 192–243 (DGSDGEGGGHDSDQEFEALIKQHEKQQDEAEKGKEEARINRAAAKVDKRKAA) show a composition bias toward basic and acidic residues. 2 consecutive PHD-type zinc fingers follow at residues 265–312 (QENC…CEEH) and 328–375 (MDYC…CIIP). Chromo domains lie at 373–476 (IIPE…STLS) and 501–583 (MQIH…GPKE). In terms of domain architecture, Helicase ATP-binding spans 628–812 (RHCWSNGTDA…FHLLNFLAPD (185 aa)). Residue 641-648 (DEMGLGKT) coordinates ATP. The short motif at 763–766 (DEAH) is the DEAH box element. In terms of domain architecture, Helicase C-terminal spans 944 to 1107 (LLQKMLRKLK…GKSMSKTELD (164 aa)). Disordered stretches follow at residues 1120-1141 (EEEA…PNEQ), 1186-1212 (TKEA…QDPN), 1248-1295 (ENMG…EERS), and 1754-1787 (RASS…YPRY). Residues 1190–1199 (DDADDDEDET) are compositionally biased toward acidic residues. The segment covering 1248–1261 (ENMGQDWSAQNNQQ) has biased composition (polar residues). Residues 1761 to 1773 (TKDEPMDTSDKDI) are compositionally biased toward basic and acidic residues.

The protein belongs to the SNF2/RAD54 helicase family. Expressed in the head and vulva.

It is found in the nucleus. The catalysed reaction is ATP + H2O = ADP + phosphate + H(+). Its function is as follows. ATP-dependent chromatin-remodeling factor that has a role in notch signaling-dependent vulval cell fate determination. May also have a role in pharyngeal precursor cell specification. This Caenorhabditis elegans protein is Chromodomain-helicase-DNA-binding protein 3 homolog (chd-3).